We begin with the raw amino-acid sequence, 354 residues long: Guanine nucleotide-binding protein G(i) subunit alpha-3 (354 aa).

G2 carries the N-myristoyl glycine lipid modification. C3 carries the S-palmitoyl cysteine lipid modification. In terms of domain architecture, G-alpha spans 32–354 (KEVKLLLLGA…KNNLKECGLY (323 aa)). The G1 motif stretch occupies residues 35–48 (KLLLLGAGESGKST). 18 residues coordinate GTP: G42, E43, S44, G45, K46, S47, T48, D150, S151, L175, R176, T177, R178, V179, K180, T181, V201, and G203. Residues E43, S44, G45, K46, S47, and T48 each contribute to the GDP site. Residue S47 coordinates Mg(2+). Residues S151, L175, R176, T177, and R178 each coordinate GDP. Residues 173-181 (DVLRTRVKT) form a G2 motif region. Position 178 is an ADP-ribosylarginine; by cholera toxin (R178). Residue T181 coordinates Mg(2+). Residues 196-205 (FKMFDVGGQR) form a G3 motif region. The residue at position 204 (Q204) is a Deamidated glutamine; by Photorhabdus PAU_02230. The segment at 265 to 272 (ILFLNKKD) is G4 motif. N269, K270, D272, L273, C325, A326, and T327 together coordinate GTP. Residues N269, K270, and D272 each coordinate GDP. The segment at 324-329 (TCATDT) is G5 motif. The GDP site is built by C325 and A326. C351 is modified (ADP-ribosylcysteine; by pertussis toxin).

Belongs to the G-alpha family. G(i/o/t/z) subfamily. As to quaternary structure, heterotrimeric G proteins are composed of 3 units; alpha, beta and gamma. The alpha subunit contains the guanine nucleotide binding site. GTP binding causes dissociation of the heterotrimer, liberating the individual subunits so that they can interact with downstream effector proteins. Forms a complex with CCDC88A/GIV and EGFR which leads to enhanced EGFR signaling and triggering of cell migration; ligand stimulation is required for recruitment of GNAI3 to the complex. Interacts (inactive GDP-bound form) with CCDC88A/GIV (via GBA motif); the interaction leads to activation of GNAI3. Interacts (inactive GDP-bound form) with CCDC88C/DAPLE (via GBA motif); the interaction leads to activation of GNAI3. Interacts (inactive GDP-bound form) with NUCB1 (via GBA motif) and NUCB2 (via GBA motif); the interaction leads to activation of GNAI3. Interacts (inactive GDP-bound form) with PLCD4 (via GBA motif); the interaction leads to activation of GNAI3. Interacts with INSR; the interaction is probably mediated by CCDC88A/GIV. Interacts with GPSM1. Interacts (GDP-bound form) with GPSM2 (via GoLoco domains). Does not interact with RGS2. Interacts with RGS8 and RGS10; this strongly enhances the intrinsic GTPase activity. Interacts with RGS16; this strongly enhances the intrinsic GTPase activity. Interacts with RGS12. Interacts (via active GTP- or inactive GDP-bound form) with RGS14. Interacts (via active GTP-bound form) with TRPC5 (via ANK repeats) in a homotetrameric ion channel; the interaction is direct and activates the channel activity. (Microbial infection) Deamidated at Gln-204 by Photorhabdus asymbiotica toxin PAU_02230, blocking GTP hydrolysis of heterotrimeric GNAQ or GNA11 and G-alphai (GNAI1, GNAI2 or GNAI3) proteins, thereby activating RhoA.

It is found in the cytoplasm. It localises to the cell membrane. The protein resides in the cytoskeleton. The protein localises to the microtubule organizing center. Its subcellular location is the centrosome. Functionally, heterotrimeric guanine nucleotide-binding proteins (G proteins) function as transducers downstream of G protein-coupled receptors (GPCRs) in numerous signaling cascades. The alpha chain contains the guanine nucleotide binding site and alternates between an active, GTP-bound state and an inactive, GDP-bound state. Signaling by an activated GPCR promotes GDP release and GTP binding. The alpha subunit has a low GTPase activity that converts bound GTP to GDP, thereby terminating the signal. Both GDP release and GTP hydrolysis are modulated by numerous regulatory proteins. Signaling is mediated via effector proteins, such as adenylate cyclase. Inhibits adenylate cyclase activity, leading to decreased intracellular cAMP levels. Stimulates the activity of receptor-regulated K(+) channels. The active GTP-bound form prevents the association of RGS14 with centrosomes and is required for the translocation of RGS14 from the cytoplasm to the plasma membrane. May play a role in cell division. The active GTP-bound form activates the calcium permeant TRPC5 ion channels. The chain is Guanine nucleotide-binding protein G(i) subunit alpha-3 (GNAI3) from Homo sapiens (Human).